The chain runs to 172 residues: NADH-ubiquinone oxidoreductase chain 6 (172 aa).

Transmembrane regions (helical) follow at residues 1–21 (MTYFVLFLGLCFVLGGLAVAS), 27–47 (YGVVGLVLASVAGCGWLLSLG), 48–68 (ISFVSLVLFMVYLGGMLVVFV), 87–107 (VVGYGMGFVAVLVAGVVVGGF), and 138–158 (CGVGMFLAAGWGLLLTLFVVL).

It belongs to the complex I subunit 6 family.

Its subcellular location is the mitochondrion membrane. It catalyses the reaction a ubiquinone + NADH + 5 H(+)(in) = a ubiquinol + NAD(+) + 4 H(+)(out). In terms of biological role, core subunit of the mitochondrial membrane respiratory chain NADH dehydrogenase (Complex I) that is believed to belong to the minimal assembly required for catalysis. Complex I functions in the transfer of electrons from NADH to the respiratory chain. The immediate electron acceptor for the enzyme is believed to be ubiquinone. This Uria aalge (Common mure) protein is NADH-ubiquinone oxidoreductase chain 6 (MT-ND6).